Consider the following 98-residue polypeptide: NADH-ubiquinone oxidoreductase chain 4L (98 aa).

The next 3 membrane-spanning stretches (helical) occupy residues 2 to 22 (PSIS…MLVF), 29 to 49 (SLLC…LFIM), and 61 to 81 (ILLL…LVMV).

It belongs to the complex I subunit 4L family. As to quaternary structure, core subunit of respiratory chain NADH dehydrogenase (Complex I) which is composed of 45 different subunits.

Its subcellular location is the mitochondrion inner membrane. The catalysed reaction is a ubiquinone + NADH + 5 H(+)(in) = a ubiquinol + NAD(+) + 4 H(+)(out). Core subunit of the mitochondrial membrane respiratory chain NADH dehydrogenase (Complex I) which catalyzes electron transfer from NADH through the respiratory chain, using ubiquinone as an electron acceptor. Part of the enzyme membrane arm which is embedded in the lipid bilayer and involved in proton translocation. In Lepilemur mitsinjoensis (Mitsinjo sportive lemur), this protein is NADH-ubiquinone oxidoreductase chain 4L (MT-ND4L).